Reading from the N-terminus, the 278-residue chain is HTH-type transcriptional regulator HdfR (278 aa).

In terms of domain architecture, HTH lysR-type spans 1–58 (MDTELLKTFLEVSRTRHFGRAAEALYLTQSAVSFRIRQLENQLGVNLFTRHRNNIRLT). Residues 18–37 (FGRAAEALYLTQSAVSFRIR) constitute a DNA-binding region (H-T-H motif).

Belongs to the LysR transcriptional regulatory family.

In terms of biological role, negatively regulates the transcription of the flagellar master operon flhDC by binding to the upstream region of the operon. The sequence is that of HTH-type transcriptional regulator HdfR from Salmonella newport (strain SL254).